A 129-amino-acid chain; its full sequence is Large ribosomal subunit protein uL14m (129 aa).

Belongs to the universal ribosomal protein uL14 family.

It is found in the mitochondrion. This Acanthamoeba castellanii (Amoeba) protein is Large ribosomal subunit protein uL14m (RPL14).